A 343-amino-acid polypeptide reads, in one-letter code: Heat-inducible transcription repressor HrcA (343 aa).

This sequence belongs to the HrcA family.

Negative regulator of class I heat shock genes (grpE-dnaK-dnaJ and groELS operons). Prevents heat-shock induction of these operons. This Bacillus velezensis (strain DSM 23117 / BGSC 10A6 / LMG 26770 / FZB42) (Bacillus amyloliquefaciens subsp. plantarum) protein is Heat-inducible transcription repressor HrcA.